The chain runs to 380 residues: Chaperone protein DnaJ (380 aa).

The J domain maps to 5–69 (DYYEILGVSK…QKRAHYDQFG (65 aa)). The CR-type zinc-finger motif lies at 135–217 (GKETDIEIPR…CGGTGRVKRR (83 aa)). Residues cysteine 148, cysteine 151, cysteine 165, cysteine 168, cysteine 191, cysteine 194, cysteine 205, and cysteine 208 each coordinate Zn(2+). 4 CXXCXGXG motif repeats span residues 148 to 155 (CNTCHGTG), 165 to 172 (CSYCHGTG), 191 to 198 (CPYCGGTG), and 205 to 212 (CTTCGGTG).

Belongs to the DnaJ family. Homodimer. Requires Zn(2+) as cofactor.

Its subcellular location is the cytoplasm. Participates actively in the response to hyperosmotic and heat shock by preventing the aggregation of stress-denatured proteins and by disaggregating proteins, also in an autonomous, DnaK-independent fashion. Unfolded proteins bind initially to DnaJ; upon interaction with the DnaJ-bound protein, DnaK hydrolyzes its bound ATP, resulting in the formation of a stable complex. GrpE releases ADP from DnaK; ATP binding to DnaK triggers the release of the substrate protein, thus completing the reaction cycle. Several rounds of ATP-dependent interactions between DnaJ, DnaK and GrpE are required for fully efficient folding. Also involved, together with DnaK and GrpE, in the DNA replication of plasmids through activation of initiation proteins. This Parageobacillus thermoglucosidasius (Geobacillus thermoglucosidasius) protein is Chaperone protein DnaJ.